Here is a 152-residue protein sequence, read N- to C-terminus: Transcriptional repressor NrdR (152 aa).

A zinc finger spans residues 3-34 (CPYCSYNESKVVDSRSTEDSISIRRRRECLEC). Positions 49 to 139 (ILVIKKNLNR…VYRQFKDINT (91 aa)) constitute an ATP-cone domain.

It belongs to the NrdR family. Zn(2+) serves as cofactor.

In terms of biological role, negatively regulates transcription of bacterial ribonucleotide reductase nrd genes and operons by binding to NrdR-boxes. The polypeptide is Transcriptional repressor NrdR (Clostridium tetani (strain Massachusetts / E88)).